The primary structure comprises 379 residues: uncharacterized protein (379 aa).

29–36 (GPLNSGKT) is a binding site for ATP.

This sequence belongs to the archaeal ATPase family.

This is an uncharacterized protein from Methanocaldococcus jannaschii (strain ATCC 43067 / DSM 2661 / JAL-1 / JCM 10045 / NBRC 100440) (Methanococcus jannaschii).